A 307-amino-acid chain; its full sequence is Elongation factor Ts (307 aa).

The involved in Mg(2+) ion dislocation from EF-Tu stretch occupies residues 79–82 (TDFV).

It belongs to the EF-Ts family.

It is found in the cytoplasm. Its function is as follows. Associates with the EF-Tu.GDP complex and induces the exchange of GDP to GTP. It remains bound to the aminoacyl-tRNA.EF-Tu.GTP complex up to the GTP hydrolysis stage on the ribosome. The polypeptide is Elongation factor Ts (Bartonella henselae (strain ATCC 49882 / DSM 28221 / CCUG 30454 / Houston 1) (Rochalimaea henselae)).